A 261-amino-acid chain; its full sequence is MIIADNIKQFHSIRNSLIKQQKIGFVPTMGALHNGHISLIKKAKSENDVVIVSIFVNPTQFNNPNDYQTYPNQLQQDIQILASLDVDVLFNPSEKDIYPDGNLLRIEPKLEIANILEGKSRPGHFSGMLTVILKLLQITKPNNLYLGEKDYQQVMLIKQLVKDFFINTKIIVCPTQRQPSGLPLSSRNKNLTSTDIEIANKIYEILRQDNFSNLEELTNKINSTGAKLQYIQKLNNRIFLAFYIGKVRLIDNFLKETGPSC.

29–36 (MGALHNGH) is an ATP binding site. Residue H36 is the Proton donor of the active site. Residue Q60 coordinates (R)-pantoate. Residue Q60 participates in beta-alanine binding. 147–150 (GEKD) is a binding site for ATP. Residue Q153 participates in (R)-pantoate binding. Position 184-187 (184-187 (LSSR)) interacts with ATP.

The protein belongs to the pantothenate synthetase family. Homodimer.

It localises to the cytoplasm. It catalyses the reaction (R)-pantoate + beta-alanine + ATP = (R)-pantothenate + AMP + diphosphate + H(+). It participates in cofactor biosynthesis; (R)-pantothenate biosynthesis; (R)-pantothenate from (R)-pantoate and beta-alanine: step 1/1. Its function is as follows. Catalyzes the condensation of pantoate with beta-alanine in an ATP-dependent reaction via a pantoyl-adenylate intermediate. This Francisella tularensis subsp. mediasiatica (strain FSC147) protein is Pantothenate synthetase.